Consider the following 477-residue polypeptide: (R)-2-hydroxyglutaryl-CoA dehydratase, subunit alpha (477 aa).

This sequence belongs to the FldB/FldC dehydratase alpha/beta subunit family. As to quaternary structure, the (R)-2-hydroxyglutaryl-CoA dehydratase enzyme system is a heterodimer composed of an alpha subunit (HgdA) and a beta subunit (HgdB). Requires [4Fe-4S] cluster as cofactor. It depends on FMN as a cofactor. Mg(2+) serves as cofactor.

The protein localises to the cytoplasm. It catalyses the reaction (R)-2-hydroxyglutaryl-CoA = (2E)-glutaconyl-CoA + H2O. The protein operates within amino-acid degradation; L-glutamate degradation via hydroxyglutarate pathway; crotonoyl-CoA from L-glutamate: step 4/5. Activated by the HgdC. Reversibly inactivated by oxidants such as 2-nitrophenol, 3-nitrophenol, 4-nitrophenol, 4-nitrobenzoate, carbonyl cyanide 4-(trifluoromethoxy)phenylhydrazone (FCCP) and chloramphenicol. Irreversibly inactivated by oxidants such as hydroxylamine and nitrite. Functionally, involved in the fermentation of L-glutamate via the hydroxyglutarate pathway. Catalyzes the reversible syn-elimination of water from (R)-2-hydroxyglutaryl-CoA to yield (E)-glutaconyl-CoA. The dehydration mechanism involves a transient one electron reduction of the thioester from (R)-2-hydroxyglutaryl-CoA, generating a ketyl radical. Prior to (E)-glutaconyl-CoA formation, the ketyl radical is subsequently reoxidized by electron transfer back to the HgdA-HgdB complex (CompD) to avoid change in oxidation state of the substrate. The appropriate redox state of dehydratase HgdA-HgdB complex (CompD) is maintained by HgdC (CompA) via hydrolysis of ATP and ATP-dependent electron transfer. Since the electron is recycled, the dehydratase is able to perform several turnovers with only catalytic amounts of ATP and substoichiometric amounts of HgdC (CompA). In Acidaminococcus fermentans (strain ATCC 25085 / DSM 20731 / CCUG 9996 / CIP 106432 / VR4), this protein is (R)-2-hydroxyglutaryl-CoA dehydratase, subunit alpha.